The primary structure comprises 478 residues: Bifunctional protein HldE (478 aa).

The segment at 1–318 is ribokinase; sequence MKVTLPDFRQ…ENAIRGRADT (318 aa). 195 to 198 is a binding site for ATP; that stretch reads NLSE. Residue Asp264 is part of the active site. The tract at residues 344 to 478 is cytidylyltransferase; it reads MTNGCFDILH…NMIKASTSQS (135 aa).

The protein in the N-terminal section; belongs to the carbohydrate kinase PfkB family. In the C-terminal section; belongs to the cytidylyltransferase family. As to quaternary structure, homodimer.

The catalysed reaction is D-glycero-beta-D-manno-heptose 7-phosphate + ATP = D-glycero-beta-D-manno-heptose 1,7-bisphosphate + ADP + H(+). The enzyme catalyses D-glycero-beta-D-manno-heptose 1-phosphate + ATP + H(+) = ADP-D-glycero-beta-D-manno-heptose + diphosphate. The protein operates within nucleotide-sugar biosynthesis; ADP-L-glycero-beta-D-manno-heptose biosynthesis; ADP-L-glycero-beta-D-manno-heptose from D-glycero-beta-D-manno-heptose 7-phosphate: step 1/4. It participates in nucleotide-sugar biosynthesis; ADP-L-glycero-beta-D-manno-heptose biosynthesis; ADP-L-glycero-beta-D-manno-heptose from D-glycero-beta-D-manno-heptose 7-phosphate: step 3/4. Its function is as follows. Catalyzes the phosphorylation of D-glycero-D-manno-heptose 7-phosphate at the C-1 position to selectively form D-glycero-beta-D-manno-heptose-1,7-bisphosphate. In terms of biological role, catalyzes the ADP transfer from ATP to D-glycero-beta-D-manno-heptose 1-phosphate, yielding ADP-D-glycero-beta-D-manno-heptose. This chain is Bifunctional protein HldE, found in Pectobacterium atrosepticum (strain SCRI 1043 / ATCC BAA-672) (Erwinia carotovora subsp. atroseptica).